Reading from the N-terminus, the 49-residue chain is Astexin-3 (49 aa).

Positions 1-25 (MRTYNRSLPARAGLTDLGKVTTHTK) are excised as a propeptide. A cross-link (isoaspartyl glycine isopeptide (Gly-Asp)) is located at residues 26–34 (GPTPMVGLD).

Post-translationally, this lasso peptide is hydrolyzed to a linear form by the isopeptidase AtxE2, in vitro. The isopeptidase AtxE2 only recognizes the threaded form (but not the unthreaded form).

It is found in the cytoplasm. Its subcellular location is the secreted. Functionally, shows weak antimicrobial activity against its phylogenetic relative Caulobacter crescentus. Does not show activity against other bacteria tested (E.coli, Vibrio sp, Burkhoderia thailandensis, and Salmonella newport). The protein is Astexin-3 of Asticcacaulis excentricus (strain ATCC 15261 / DSM 4724 / KCTC 12464 / NCIMB 9791 / VKM B-1370 / CB 48).